The primary structure comprises 324 residues: Porphobilinogen deaminase (324 aa).

Cysteine 246 bears the S-(dipyrrolylmethanemethyl)cysteine mark. The interval 261–279 (GQAPEEGGRAAASQAPAAL) is insert.

Belongs to the HMBS family. As to quaternary structure, monomer. The cofactor is dipyrromethane.

It carries out the reaction 4 porphobilinogen + H2O = hydroxymethylbilane + 4 NH4(+). It participates in porphyrin-containing compound metabolism; protoporphyrin-IX biosynthesis; coproporphyrinogen-III from 5-aminolevulinate: step 2/4. Functionally, tetrapolymerization of the monopyrrole PBG into the hydroxymethylbilane pre-uroporphyrinogen in several discrete steps. This is Porphobilinogen deaminase (hemC) from Paenibacillus macerans (Bacillus macerans).